The sequence spans 467 residues: UDP-glycosyltransferase 71D1 (467 aa).

His16 (proton acceptor) is an active-site residue. His16 is an an anthocyanidin binding site. Residue Asp122 is the Charge relay of the active site. UDP-alpha-D-glucose contacts are provided by Thr144, Gln341, His356, Trp359, Asn360, Ser361, and Glu364. Position 379 (Ala379) interacts with an anthocyanidin. The UDP-alpha-D-glucose site is built by Glu380 and Gln381.

The protein belongs to the UDP-glycosyltransferase family.

The enzyme catalyses a flavonol + UDP-alpha-D-glucose = a flavonol 3-O-beta-D-glucoside + UDP + H(+). Its function is as follows. Possesses quercetin 3-O-glucosyltransferase activity in vitro. In Arabidopsis thaliana (Mouse-ear cress), this protein is UDP-glycosyltransferase 71D1 (UGT71D1).